Reading from the N-terminus, the 240-residue chain is UDP-2,3-diacylglucosamine hydrolase (240 aa).

Positions 8, 10, 41, 79, and 114 each coordinate Mn(2+). Residue 79 to 80 (NR) coordinates substrate. Positions 122, 160, 164, 167, and 195 each coordinate substrate. His195 and His197 together coordinate Mn(2+).

Belongs to the LpxH family. It depends on Mn(2+) as a cofactor.

It localises to the cell inner membrane. The catalysed reaction is UDP-2-N,3-O-bis[(3R)-3-hydroxytetradecanoyl]-alpha-D-glucosamine + H2O = 2-N,3-O-bis[(3R)-3-hydroxytetradecanoyl]-alpha-D-glucosaminyl 1-phosphate + UMP + 2 H(+). It participates in glycolipid biosynthesis; lipid IV(A) biosynthesis; lipid IV(A) from (3R)-3-hydroxytetradecanoyl-[acyl-carrier-protein] and UDP-N-acetyl-alpha-D-glucosamine: step 4/6. Hydrolyzes the pyrophosphate bond of UDP-2,3-diacylglucosamine to yield 2,3-diacylglucosamine 1-phosphate (lipid X) and UMP by catalyzing the attack of water at the alpha-P atom. Involved in the biosynthesis of lipid A, a phosphorylated glycolipid that anchors the lipopolysaccharide to the outer membrane of the cell. In Escherichia coli (strain UTI89 / UPEC), this protein is UDP-2,3-diacylglucosamine hydrolase.